The chain runs to 592 residues: Cytosolic purine 5'-nucleotidase (592 aa).

The span at 1 to 15 (MAENNNNNNNNNNNN) shows a compositional bias: low complexity. The tract at residues 1-37 (MAENNNNNNNNNNNNVSTPPHQKPHLTTGLRTSSSGL) is disordered. Aspartate 122 serves as the catalytic Nucleophile. Aspartate 122 and aspartate 124 together coordinate IMP. Mg(2+)-binding residues include aspartate 122 and aspartate 124. Residue aspartate 124 is the Proton donor of the active site. Residue asparagine 226 participates in ATP binding. The disordered stretch occupies residues 252-273 (LTEEVADEQQQMNSPPLSSLGS). Over residues 259–273 (EQQQMNSPPLSSLGS) the composition is skewed to polar residues. 7 residues coordinate IMP: arginine 299, aspartate 303, lysine 312, threonine 347, asparagine 348, serine 349, and lysine 385. Aspartate 444 contributes to the Mg(2+) binding site. Residues glutamine 547 and arginine 550 each coordinate ATP.

This sequence belongs to the 5'(3')-deoxyribonucleotidase family. As to quaternary structure, homotetramer. It depends on Mg(2+) as a cofactor.

It localises to the cytoplasm. The protein localises to the cytosol. The catalysed reaction is a ribonucleoside 5'-phosphate + H2O = a ribonucleoside + phosphate. The enzyme catalyses a 2'-deoxyribonucleoside + a ribonucleoside 5'-phosphate = a ribonucleoside + a 2'-deoxyribonucleoside 5'-phosphate. Functionally, broad specificity cytosolic 5'-nucleotidase that catalyzes the dephosphorylation of 6-hydroxypurine nucleoside 5'-monophosphates. In addition, possesses a phosphotransferase activity by which it can transfer a phosphate from a donor nucleoside monophosphate to an acceptor nucleoside. Through these activities regulates the purine nucleoside/nucleotide pools within the cell. The polypeptide is Cytosolic purine 5'-nucleotidase (nt5c2) (Dictyostelium discoideum (Social amoeba)).